The chain runs to 270 residues: 3-phenylpropionate-dihydrodiol/cinnamic acid-dihydrodiol dehydrogenase (270 aa).

10-34 (FITGGGSGLGLALVERFIEEGAQVA) contacts NAD(+). Ser-143 is a substrate binding site. Tyr-156 functions as the Proton acceptor in the catalytic mechanism.

It belongs to the short-chain dehydrogenases/reductases (SDR) family.

It catalyses the reaction 3-(cis-5,6-dihydroxycyclohexa-1,3-dien-1-yl)propanoate + NAD(+) = 3-(2,3-dihydroxyphenyl)propanoate + NADH + H(+). The catalysed reaction is (2E)-3-(cis-5,6-dihydroxycyclohexa-1,3-dien-1-yl)prop-2-enoate + NAD(+) = (2E)-3-(2,3-dihydroxyphenyl)prop-2-enoate + NADH + H(+). It participates in aromatic compound metabolism; 3-phenylpropanoate degradation. Its function is as follows. Converts 3-phenylpropionate-dihydrodiol (PP-dihydrodiol) and cinnamic acid-dihydrodiol (CI-dihydrodiol) into 3-(2,3-dihydroxylphenyl)propanoic acid (DHPP) and 2,3-dihydroxicinnamic acid (DHCI), respectively. The sequence is that of 3-phenylpropionate-dihydrodiol/cinnamic acid-dihydrodiol dehydrogenase from Shigella flexneri serotype 5b (strain 8401).